Reading from the N-terminus, the 351-residue chain is L-threonine 3-dehydrogenase (351 aa).

Zn(2+) is bound at residue cysteine 39. Active-site charge relay system residues include threonine 41 and histidine 44. Residues histidine 64, glutamate 65, cysteine 94, cysteine 97, cysteine 100, and cysteine 108 each coordinate Zn(2+). Residues isoleucine 176, aspartate 196, arginine 201, 271–273, and 295–296 contribute to the NAD(+) site; these read LGI and IY.

Belongs to the zinc-containing alcohol dehydrogenase family. Homotetramer. It depends on Zn(2+) as a cofactor.

It localises to the cytoplasm. The enzyme catalyses L-threonine + NAD(+) = (2S)-2-amino-3-oxobutanoate + NADH + H(+). Its pathway is amino-acid degradation; L-threonine degradation via oxydo-reductase pathway; glycine from L-threonine: step 1/2. Its function is as follows. Catalyzes the NAD(+)-dependent oxidation of L-threonine to 2-amino-3-ketobutyrate. The polypeptide is L-threonine 3-dehydrogenase (Francisella tularensis subsp. tularensis (strain SCHU S4 / Schu 4)).